Consider the following 115-residue polypeptide: Yop proteins translocation protein M (115 aa).

The segment at 19-39 (HGGQAGRLTETNPLTENSHQI) is disordered. The span at 27-39 (TETNPLTENSHQI) shows a compositional bias: polar residues.

In terms of biological role, belongs to an operon involved in the translocation of Yop proteins across the bacterial membranes or in the specific control of this function. The protein is Yop proteins translocation protein M (yscM) of Yersinia enterocolitica.